The sequence spans 370 residues: Protein DUF642 L-GALACTONO-1,4-LACTONE-RESPONSIVE GENE 1 (370 aa).

The first 22 residues, 1–22, serve as a signal peptide directing secretion; it reads MMYQEAALLLALLFISSNVVLS. Asn-124 carries N-linked (GlcNAc...) asparagine glycosylation.

In terms of tissue distribution, expressed at low levels in roots, seedlings and leaves.

It localises to the secreted. The protein resides in the cell wall. The polypeptide is Protein DUF642 L-GALACTONO-1,4-LACTONE-RESPONSIVE GENE 1 (Arabidopsis thaliana (Mouse-ear cress)).